A 649-amino-acid polypeptide reads, in one-letter code: 1-deoxy-D-xylulose-5-phosphate synthase 1 (649 aa).

Residues His79 and 120–122 each bind thiamine diphosphate; that span reads AHS. Asp151 is a Mg(2+) binding site. Thiamine diphosphate contacts are provided by residues 152 to 153, Asn180, Tyr289, and Glu371; that span reads GS. Asn180 contacts Mg(2+).

It belongs to the transketolase family. DXPS subfamily. As to quaternary structure, homodimer. It depends on Mg(2+) as a cofactor. The cofactor is thiamine diphosphate.

It carries out the reaction D-glyceraldehyde 3-phosphate + pyruvate + H(+) = 1-deoxy-D-xylulose 5-phosphate + CO2. Its pathway is metabolic intermediate biosynthesis; 1-deoxy-D-xylulose 5-phosphate biosynthesis; 1-deoxy-D-xylulose 5-phosphate from D-glyceraldehyde 3-phosphate and pyruvate: step 1/1. Functionally, catalyzes the acyloin condensation reaction between C atoms 2 and 3 of pyruvate and glyceraldehyde 3-phosphate to yield 1-deoxy-D-xylulose-5-phosphate (DXP). The chain is 1-deoxy-D-xylulose-5-phosphate synthase 1 from Zymomonas mobilis subsp. mobilis (strain ATCC 31821 / ZM4 / CP4).